The primary structure comprises 108 residues: MADPRVRQIKIKTGVVRRLVKERVMYEKEAKQQEEKIEKMKAEDGENYAIKKQAEILQESRMMIPDCQRRLEAAYTDLQQILESEKDLEEAEEYKEARVVLDSVKLEA.

At A2 the chain carries N-acetylalanine.

The protein belongs to the TBCA family. As to quaternary structure, supercomplex made of cofactors A to E. Cofactors A and D function by capturing and stabilizing tubulin in a quasi-native conformation. Cofactor E binds to the cofactor D-tubulin complex; interaction with cofactor C then causes the release of tubulin polypeptides that are committed to the native state. Widely expressed, but is most abundant in the testis.

It is found in the cytoplasm. The protein resides in the cytoskeleton. In terms of biological role, tubulin-folding protein; involved in the early step of the tubulin folding pathway. This Mus musculus (Mouse) protein is Tubulin-specific chaperone A (Tbca).